The sequence spans 419 residues: Protein-lysine N-methyltransferase EFM2 (419 aa).

S-adenosyl-L-methionine-binding positions include W222, 261-263 (GAG), D290, W318, and A340.

The protein belongs to the class I-like SAM-binding methyltransferase superfamily. METTL21 family.

The protein localises to the cytoplasm. In terms of biological role, S-adenosyl-L-methionine-dependent protein-lysine N-methyltransferase that mono- and dimethylates elongation factor 2 (EFT1/EFT2) at 'Lys-613' and methylates elongation factor 3A (YEF3). The sequence is that of Protein-lysine N-methyltransferase EFM2 from Saccharomyces cerevisiae (strain ATCC 204508 / S288c) (Baker's yeast).